We begin with the raw amino-acid sequence, 180 residues long: Large ribosomal subunit protein uL5 (180 aa).

Belongs to the universal ribosomal protein uL5 family. As to quaternary structure, part of the 50S ribosomal subunit; part of the 5S rRNA/L5/L18/L25 subcomplex. Contacts the 5S rRNA and the P site tRNA. Forms a bridge to the 30S subunit in the 70S ribosome.

Its function is as follows. This is one of the proteins that bind and probably mediate the attachment of the 5S RNA into the large ribosomal subunit, where it forms part of the central protuberance. In the 70S ribosome it contacts protein S13 of the 30S subunit (bridge B1b), connecting the 2 subunits; this bridge is implicated in subunit movement. Contacts the P site tRNA; the 5S rRNA and some of its associated proteins might help stabilize positioning of ribosome-bound tRNAs. In Polynucleobacter asymbioticus (strain DSM 18221 / CIP 109841 / QLW-P1DMWA-1) (Polynucleobacter necessarius subsp. asymbioticus), this protein is Large ribosomal subunit protein uL5.